Here is a 441-residue protein sequence, read N- to C-terminus: ATP-dependent protease ATPase subunit HslU (441 aa).

ATP-binding positions include isoleucine 18, 60 to 65 (GVGKTE), aspartate 254, glutamate 319, and arginine 391.

The protein belongs to the ClpX chaperone family. HslU subfamily. A double ring-shaped homohexamer of HslV is capped on each side by a ring-shaped HslU homohexamer. The assembly of the HslU/HslV complex is dependent on binding of ATP.

It is found in the cytoplasm. ATPase subunit of a proteasome-like degradation complex; this subunit has chaperone activity. The binding of ATP and its subsequent hydrolysis by HslU are essential for unfolding of protein substrates subsequently hydrolyzed by HslV. HslU recognizes the N-terminal part of its protein substrates and unfolds these before they are guided to HslV for hydrolysis. In Shewanella denitrificans (strain OS217 / ATCC BAA-1090 / DSM 15013), this protein is ATP-dependent protease ATPase subunit HslU.